The sequence spans 873 residues: Coatomer subunit gamma-2 (873 aa).

Over residues 1–11 the composition is skewed to basic and acidic residues; it reads MIKKFDKKDEE. The segment at 1 to 21 is disordered; that stretch reads MIKKFDKKDEESGSGSNPFQN. HEAT repeat units lie at residues 64–101, 283–320, 321–355, 356–392, 394–430, and 467–504; these read TEAT…ISED, RELA…KHPS, AVTA…GSES, SVDR…KYPR, HSAM…ENPE, and PQPS…QNDD.

This sequence belongs to the COPG family. As to quaternary structure, oligomeric complex.

Its subcellular location is the cytoplasm. The protein resides in the golgi apparatus membrane. The protein localises to the cytoplasmic vesicle. It is found in the COPI-coated vesicle membrane. In terms of biological role, the coatomer is a cytosolic protein complex that binds to dilysine motifs and reversibly associates with Golgi non-clathrin-coated vesicles, which further mediate biosynthetic protein transport from the ER, via the Golgi up to the trans Golgi network. Coatomer complex is required for budding from Golgi membranes, and is essential for the retrograde Golgi-to-ER transport of dilysine-tagged proteins. The polypeptide is Coatomer subunit gamma-2 (copg2) (Takifugu rubripes (Japanese pufferfish)).